A 37-amino-acid chain; its full sequence is Photosystem I reaction center subunit VIII (37 aa).

Residues 7–27 (LPAIFVPLVGLVFPAIAMVSL) form a helical membrane-spanning segment.

It belongs to the PsaI family.

It localises to the plastid. It is found in the chloroplast thylakoid membrane. Functionally, may help in the organization of the PsaL subunit. The chain is Photosystem I reaction center subunit VIII from Morus indica (Mulberry).